Reading from the N-terminus, the 579-residue chain is Rhoptry surface protein CERLI2 (579 aa).

In terms of domain architecture, C2 spans 52–84 (LHNYRTFYLLIKINEIFNINKYKQIYIIVNTDK). Repeat copies occupy residues 442-451 (QTDEIKNDNI), 452-461 (QTDEIKNDHI), 462-471 (QTDEIKNDNI), 472-481 (QTDEIKNDNI), 482-491 (QTDEIKNDHI), 492-501 (QTDEIKNDNI), 502-511 (QTDEIKNDNI), 522-531 (QTDEINNDHI), 532-541 (QTDEIKNDHI), 542-551 (QTDEIKNDHI), and 552-561 (QTDEIKNDIN). A 12 X 10 AA tandem repeat of Q-T-E-I-[K/N]-N-D-[H/N/I][I/N] region spans residues 442 to 561 (QTDEIKNDNI…QTDEIKNDIN (120 aa)).

The protein localises to the cytoplasmic vesicle. It is found in the secretory vesicle. It localises to the rhoptry membrane. Its subcellular location is the cell membrane. The protein resides in the host cell membrane. Functionally, plays an important role in rhoptry physiology and thus is essential for merozoite invasion of host erythrocytes. The chain is Rhoptry surface protein CERLI2 from Plasmodium falciparum (isolate 3D7).